Consider the following 172-residue polypeptide: Shikimate kinase (172 aa).

11–16 (GTGKTA) serves as a coordination point for ATP. Mg(2+) is bound at residue threonine 15. Residues aspartate 33, arginine 57, and glycine 79 each contribute to the substrate site. Position 117 (arginine 117) interacts with ATP. Residue arginine 136 participates in substrate binding.

This sequence belongs to the shikimate kinase family. As to quaternary structure, monomer. It depends on Mg(2+) as a cofactor.

The protein localises to the cytoplasm. The catalysed reaction is shikimate + ATP = 3-phosphoshikimate + ADP + H(+). It participates in metabolic intermediate biosynthesis; chorismate biosynthesis; chorismate from D-erythrose 4-phosphate and phosphoenolpyruvate: step 5/7. Its function is as follows. Catalyzes the specific phosphorylation of the 3-hydroxyl group of shikimic acid using ATP as a cosubstrate. The chain is Shikimate kinase from Pelotomaculum thermopropionicum (strain DSM 13744 / JCM 10971 / SI).